Here is a 980-residue protein sequence, read N- to C-terminus: Protein translocase subunit SecA (980 aa).

Residues Q109, 127–131, and D529 each bind ATP; that span reads GEGKT. Residues 954 to 980 are disordered; that stretch reads QKIGRNDPCPCGSGKKYKHCHGKDNPQ. The Zn(2+) site is built by C962, C964, C973, and H974.

Belongs to the SecA family. As to quaternary structure, monomer and homodimer. Part of the essential Sec protein translocation apparatus which comprises SecA, SecYEG and auxiliary proteins SecDF. Other proteins may also be involved. Zn(2+) serves as cofactor.

Its subcellular location is the cell inner membrane. The protein resides in the cytoplasm. The enzyme catalyses ATP + H2O + cellular proteinSide 1 = ADP + phosphate + cellular proteinSide 2.. Its function is as follows. Part of the Sec protein translocase complex. Interacts with the SecYEG preprotein conducting channel. Has a central role in coupling the hydrolysis of ATP to the transfer of proteins into and across the cell membrane, serving as an ATP-driven molecular motor driving the stepwise translocation of polypeptide chains across the membrane. The polypeptide is Protein translocase subunit SecA (Brachyspira hyodysenteriae (strain ATCC 49526 / WA1)).